Consider the following 284-residue polypeptide: Pantothenate synthetase (284 aa).

30-37 contributes to the ATP binding site; that stretch reads MGNLHEGH. Residue H37 is the Proton donor of the active site. Residue Q61 participates in (R)-pantoate binding. Residue Q61 participates in beta-alanine binding. 149 to 152 provides a ligand contact to ATP; that stretch reads GEKD. Q155 serves as a coordination point for (R)-pantoate. ATP is bound by residues V178 and 186–189; that span reads LSSR.

This sequence belongs to the pantothenate synthetase family. Homodimer.

The protein resides in the cytoplasm. It carries out the reaction (R)-pantoate + beta-alanine + ATP = (R)-pantothenate + AMP + diphosphate + H(+). It functions in the pathway cofactor biosynthesis; (R)-pantothenate biosynthesis; (R)-pantothenate from (R)-pantoate and beta-alanine: step 1/1. In terms of biological role, catalyzes the condensation of pantoate with beta-alanine in an ATP-dependent reaction via a pantoyl-adenylate intermediate. This Sodalis glossinidius (strain morsitans) protein is Pantothenate synthetase.